The chain runs to 793 residues: Tripartite terminase subunit 1 (793 aa).

The C3H1-type zinc-finger motif lies at 206-234 (CSVCFEELCVTANSGDSTHKRIVRKICDH). Position 697 to 704 (697 to 704 (FSSVFKCG)) interacts with ATP.

Belongs to the herpesviridae TRM1 protein family. As to quaternary structure, associates with TRM2 and TRM3 to form the tripartite terminase complex. Interacts with portal protein.

It localises to the host nucleus. Component of the molecular motor that translocates viral genomic DNA in empty capsid during DNA packaging. Forms a tripartite terminase complex together with TRM2 and TRM3 in the host cytoplasm. Once the complex reaches the host nucleus, it interacts with the capsid portal vertex. This portal forms a ring in which genomic DNA is translocated into the capsid. TRM1 carries an endonuclease activity that plays an important role for the cleavage of concatemeric viral DNA into unit length genomes. The sequence is that of Tripartite terminase subunit 1 from Gallid herpesvirus 2 (strain Chicken/Md5/ATCC VR-987) (GaHV-2).